The primary structure comprises 359 residues: MLYCRQGFEKECAGEIQDKATQLEVYGFPRVFKNAGYVLFECYQDGDADKLARELDFNALIFARQMFAVAAEFTELPSEDRISPILAELGEIDAFPVCGDLRIETPDTNEAKELLKFCRKFTVPMRQALRGKGLLLAKENAKKPVFHLCFVASGHCFAGYSYSHNNSRFFMGIPRLKFPADAPSRSTLKLEEAFHVFIPREEWDTRLSSGMWAVDLGACPGGWTYQLVQRSMFVHCVDNGMMADSLMETGQIKHHMVDGFKFEPDRKNVTWLVCDMVEKPARVAHLMGEWLIKGWAKETIFNLKLPMKGRYDEVLQDIENLKTFLIENKVKFKLQAKHLYHDREEITVHIQVLSNISPH.

S-adenosyl-L-methionine is bound by residues S186, 219 to 222 (CPGG), D238, D258, and D275. The Proton acceptor role is filled by K304.

Belongs to the class I-like SAM-binding methyltransferase superfamily. RNA methyltransferase RlmE family. RlmM subfamily. In terms of assembly, monomer.

It localises to the cytoplasm. It carries out the reaction cytidine(2498) in 23S rRNA + S-adenosyl-L-methionine = 2'-O-methylcytidine(2498) in 23S rRNA + S-adenosyl-L-homocysteine + H(+). In terms of biological role, catalyzes the 2'-O-methylation at nucleotide C2498 in 23S rRNA. The chain is Ribosomal RNA large subunit methyltransferase M from Vibrio vulnificus (strain YJ016).